The following is an 858-amino-acid chain: Elongation factor 2 (858 aa).

One can recognise a tr-type G domain in the interval 17-362; sequence ANIRNMSVIA…MITIHLPSPV (346 aa). 26–33 provides a ligand contact to GTP; it reads AHVDHGKS. Phosphothreonine is present on residues T57 and T59. GTP contacts are provided by residues 158–161 and 216–218; these read NKMD and SGL. H715 is subject to Diphthamide.

Belongs to the TRAFAC class translation factor GTPase superfamily. Classic translation factor GTPase family. EF-G/EF-2 subfamily. In terms of assembly, binds to 80S ribosomes. Actively translating ribosomes show mutually exclusive binding of eIF5a (EIF5A or EIF5A2) and EEF2/eEF2. Interacts with SERBP1; interaction sequesters EEF2/eEF2 at the A-site of the ribosome, thereby blocking the interaction sites of the mRNA-tRNA complex, promoting ribosome stabilization and hibernation. Interacts with HABP4; interaction takes place at the A-site of hibernating ribosomes and promotes ribosome stabilization. Phosphorylation by EF-2 kinase completely inactivates EF-2. In terms of processing, diphthamide is 2-[3-carboxyamido-3-(trimethyl-ammonio)propyl]histidine.

It is found in the cytoplasm. The protein resides in the nucleus. It catalyses the reaction GTP + H2O = GDP + phosphate + H(+). Functionally, catalyzes the GTP-dependent ribosomal translocation step during translation elongation. During this step, the ribosome changes from the pre-translocational (PRE) to the post-translocational (POST) state as the newly formed A-site-bound peptidyl-tRNA and P-site-bound deacylated tRNA move to the P and E sites, respectively. Catalyzes the coordinated movement of the two tRNA molecules, the mRNA and conformational changes in the ribosome. The sequence is that of Elongation factor 2 (EEF2) from Gallus gallus (Chicken).